A 240-amino-acid chain; its full sequence is Putative F-box/kelch-repeat protein At2g29860 (240 aa).

A disordered region spans residues 1-20 (MVLLSEIPGGSNGDDPNMNP). In terms of domain architecture, F-box spans 17–63 (NMNPQELPEELIESIVAPIPRCYYPSLSLLSRAFRHVITSQQLFVTR). Kelch repeat units follow at residues 120 to 165 (KIYV…VIDG) and 167 to 212 (IYVI…VTYA).

This Arabidopsis thaliana (Mouse-ear cress) protein is Putative F-box/kelch-repeat protein At2g29860.